Here is a 299-residue protein sequence, read N- to C-terminus: Fibrinogen silencer-binding protein (299 aa).

A Glycyl lysine isopeptide (Lys-Gly) (interchain with G-Cter in SUMO2) cross-link involves residue Lys94. The tract at residues 189–211 (EGSESPSLSSVDMRMTSSPSSVP) is disordered. A compositionally biased stretch (polar residues) spans 192–209 (ESPSLSSVDMRMTSSPSS).

In terms of assembly, interacts with APBA1 (via PDZ 1 and 2 domains).

Its subcellular location is the nucleus. Its function is as follows. Transcriptional repressor that down-regulates the expression of the fibrinogen gamma chain. Represses transcription of GSK3B gene promoter via its interaction with APBA1. This is Fibrinogen silencer-binding protein (Fsbp) from Mus musculus (Mouse).